A 1537-amino-acid chain; its full sequence is Adhesion G protein-coupled receptor L3 (1537 aa).

The first 19 residues, 1-19 (MWPPQLLILTMLLAPVVHG), serve as a signal peptide directing secretion. Residues 20–943 (GKHNERHPAL…VKHSDAVHDL (924 aa)) lie on the Extracellular side of the membrane. The segment at 53–80 (PAAERSTAHRGQGPRGAARGVRGPGAPG) is disordered. Residues 103 to 192 (SCESYPIELR…KYLEVQYECV (90 aa)) enclose the SUEL-type lectin domain. 5 disulfide bridges follow: cysteine 104/cysteine 134, cysteine 113/cysteine 191, cysteine 146/cysteine 178, cysteine 159/cysteine 165, and cysteine 203/cysteine 385. The N-linked (GlcNAc...) asparagine glycan is linked to asparagine 161. One can recognise an Olfactomedin-like domain in the interval 202-461 (LCPGLLKGVY…VVKYSLDFGP (260 aa)). The segment at 317 to 347 (YHDTSPYRWGGKSDIDLAVDENGLWVIYATE) is interaction with FLRT3. 4 residues coordinate Ca(2+): aspartate 332, asparagine 380, alanine 381, and valine 435. The tract at residues 521-540 (RSTTASLPGRRNRSTSTPSP) is disordered. 6 N-linked (GlcNAc...) asparagine glycosylation sites follow: asparagine 532, asparagine 617, asparagine 827, asparagine 840, asparagine 885, and asparagine 911. The 180-residue stretch at 756–935 (DIVRENTDNI…AVLMAHVEVK (180 aa)) folds into the GAIN-B domain. Disulfide bonds link cysteine 886/cysteine 917 and cysteine 905/cysteine 919. The segment at 886-935 (CSFWSYSKRTMTGYWSTQGCRLLTTNKTHTTCSCNHLTNFAVLMAHVEVK) is GPS. The segment at 923–939 (TNFAVLMAHVEVKHSDA) is stachel. A helical membrane pass occupies residues 944–969 (LLDVITWVGILLSLVCLLICIFTFCF). Topologically, residues 970–975 (FRGLQS) are cytoplasmic. Residues 976 to 999 (DRNTIHKNLCISLFVAELLFLIGI) traverse the membrane as a helical segment. N-linked (GlcNAc...) asparagine glycosylation is present at asparagine 1000. Residues 1000–1006 (NRTDQPI) are Extracellular-facing. A helical membrane pass occupies residues 1007–1034 (ACAVFAALLHFFFLAAFTWMFLEGVQLY). A disulfide bond links cysteine 1008 and cysteine 1080. Topologically, residues 1035–1048 (IMLVEVFESEHSRR) are cytoplasmic. A helical transmembrane segment spans residues 1049 to 1071 (KYFYLVGYGMPALIVAVSAAVDY). At 1072–1086 (RSYGTDKVCWLRLDT) the chain is on the extracellular side. The helical transmembrane segment at 1087 to 1112 (YFIWSFIGPATLIIMLNVIFLGIALY) threads the bilayer. Topologically, residues 1113–1142 (KMFHHTAILKPESGCLDNINYEDNRPFIKS) are cytoplasmic. A helical transmembrane segment spans residues 1143 to 1163 (WVIGAIALLCLLGLTWAFGLM). The Extracellular segment spans residues 1164–1168 (YINES). N-linked (GlcNAc...) asparagine glycosylation occurs at asparagine 1166. A helical membrane pass occupies residues 1169-1195 (TVIMAYLFTIFNSLQGMFIFIFHCVLQ). At 1196-1537 (KKVRKEYGKC…KGPAHLVTSL (342 aa)) the chain is on the cytoplasmic side. A disordered region spans residues 1213–1237 (GKSTESSIGSGKTSGSRTPGRYSTG). Serine 1254 and serine 1522 each carry phosphoserine. The disordered stretch occupies residues 1512–1537 (FIVPPNKDGASPEGTSKGPAHLVTSL). A PDZ-binding motif is present at residues 1532–1537 (HLVTSL).

The protein belongs to the G-protein coupled receptor 2 family. LN-TM7 subfamily. Heterodimer of 2 chains generated by proteolytic processing; the large extracellular N-terminal fragment and the membrane-bound C-terminal fragment predominantly remain associated and non-covalently linked. Interacts (via olfactomedin-like domain) with FLRT1 (via extracellular domain). Interacts (via olfactomedin-like domain) with FLRT2 (via extracellular domain). Interacts (via olfactomedin-like domain) with FLRT3 (via extracellular domain); the interaction is direct. Interacts (via extracellular domain) with TENM1. Interacts (via extracellular domain) with TENM2. Interacts (via extracellular domain) with TENM3. Identified in a complex with FLRT3 and UNC5B; does not interact with UNC5B by itself. Identified in a complex with FLRT3 and UNC5D; does not interact with UNC5D by itself. As to quaternary structure, interacts (via PDZ-binding motif) with SHANK3. Interacts (via PDZ-binding motif) with DLG4. In terms of processing, autoproteolytically processed at the GPS region of the GAIN-B domain; this cleavage modulates receptor activity. Post-translationally, O-glycosylated (major) and N-glycosylated. As to expression, localizes to postsynaptic spines in non-overlapping dendritic domains of CA1-region pyramidal neurons: specifically localizes to excitatory synapses in the S.oriens and S.radiatum, corresponding to distinct presynaptic inputs onto CA1-region pyramidal neurons.

The protein localises to the cell membrane. It is found in the postsynaptic cell membrane. The protein resides in the cell projection. Its subcellular location is the axon. It localises to the cell junction. Its activity is regulated as follows. Forms a heterodimer of 2 chains generated by proteolytic processing that remain associated through non-covalent interactions mediated by the GAIN-B domain. In the inactivated receptor, the Stachel sequence (also named stalk) is embedded in the GAIN-B domain, where it adopts a beta-strand conformation. On activation, the Stachel moves into the 7 transmembrane region and adopts a twisted hook-shaped configuration that forms contacts within the receptor, leading to coupling of a G-alpha protein, which activates signaling. The cleaved GAIN-B and N-terminal domains can then dissociate from the rest of the receptor. Functionally, orphan adhesion G-protein coupled receptor (aGPCR), which mediates synapse specificity. Ligand binding causes a conformation change that triggers signaling via guanine nucleotide-binding proteins (G proteins) and modulates the activity of downstream effectors. ADGRL3 is coupled with different classes of G alpha proteins, such as G(12)/G(13), G(s), G(i) or G(q), depending on the context. Coupling to G(12)/G(13) G proteins, which mediates the activation Rho small GTPases is the most efficient. Following G-protein coupled receptor activation, associates with cell adhesion molecules that are expressed at the surface of adjacent cells to direct synapse specificity. Specifically mediates the establishment of Schaffer-collateral synapses formed by CA3-region axons on CA1-region pyramidal neurons in the hippocampus. Localizes to postsynaptic spines in excitatory synapses in the S.oriens and S.radiatum and interacts with presynaptic cell adhesion molecules FLRT3 and TENM2, promoting synapse formation. Plays a role in the development of glutamatergic synapses in the cortex. Important in determining the connectivity rates between the principal neurons in the cortex. In terms of biological role, orphan adhesion G-protein coupled receptor (aGPCR), which mediates synapse specificity. Ligand binding causes a conformation change that triggers signaling via guanine nucleotide-binding proteins (G proteins) and modulates the activity of downstream effectors, such as adenylate cyclase. Isoform 1 is specifically coupled to G(s) G proteins and mediates activation of adenylate cyclase activity. Following G-protein coupled receptor activation, undergoes liquid-liquid phase transition, associates with (1) cell adhesion molecules that are expressed at the surface of adjacent cells, as well as (2) PDZ-containing proteins, such as SHANK3 and DLG4, in the cytoplasm to direct synapse formation. Its function is as follows. Orphan adhesion G-protein coupled receptor (aGPCR). Ligand binding causes a conformation change that triggers signaling via guanine nucleotide-binding proteins (G proteins) and modulates the activity of downstream effectors, such as RhoA pathway. Isoform 7 is coupled to G(12) and/or G(13) G proteins (GNA12 and GNA13, respectively) and mediates the activation Rho small GTPases. The protein is Adhesion G protein-coupled receptor L3 of Mus musculus (Mouse).